Here is an 82-residue protein sequence, read N- to C-terminus: Large ribosomal subunit protein bL31B (82 aa).

It belongs to the bacterial ribosomal protein bL31 family. Type B subfamily. As to quaternary structure, part of the 50S ribosomal subunit.

The chain is Large ribosomal subunit protein bL31B from Acinetobacter baylyi (strain ATCC 33305 / BD413 / ADP1).